Reading from the N-terminus, the 439-residue chain is Xylose isomerase (439 aa).

Residues histidine 101 and aspartate 104 contribute to the active site. Mg(2+) is bound by residues glutamate 232, glutamate 268, histidine 271, aspartate 296, aspartate 307, aspartate 309, and aspartate 339.

Belongs to the xylose isomerase family. As to quaternary structure, homotetramer. Mg(2+) is required as a cofactor.

It is found in the cytoplasm. It carries out the reaction alpha-D-xylose = alpha-D-xylulofuranose. This chain is Xylose isomerase, found in Pseudoalteromonas atlantica (strain T6c / ATCC BAA-1087).